We begin with the raw amino-acid sequence, 1155 residues long: uncharacterized protein (1155 aa).

Residues 1 to 19 form the signal peptide; that stretch reads MNKNIFITLLISSLLLLSG. The N-palmitoyl cysteine moiety is linked to residue Cys-20. Cys-20 is lipidated: S-diacylglycerol cysteine. A run of 4 helical transmembrane segments spans residues 291–311, 395–415, 424–444, and 459–479; these read VSAI…IGNI, LGFI…FLIF, ALIT…FMLF, and ISYA…SMII.

Belongs to the TrbL/VirB6 family.

The protein localises to the cell membrane. This is an uncharacterized protein from Rickettsia felis (strain ATCC VR-1525 / URRWXCal2) (Rickettsia azadi).